Consider the following 371-residue polypeptide: Peptide chain release factor 2 (371 aa).

Gln-252 is modified (N5-methylglutamine).

Belongs to the prokaryotic/mitochondrial release factor family. Post-translationally, methylated by PrmC. Methylation increases the termination efficiency of RF2.

It is found in the cytoplasm. Functionally, peptide chain release factor 2 directs the termination of translation in response to the peptide chain termination codons UGA and UAA. In Staphylococcus epidermidis (strain ATCC 35984 / DSM 28319 / BCRC 17069 / CCUG 31568 / BM 3577 / RP62A), this protein is Peptide chain release factor 2.